The sequence spans 146 residues: Large ribosomal subunit protein uL11 (146 aa).

This sequence belongs to the universal ribosomal protein uL11 family. As to quaternary structure, part of the ribosomal stalk of the 50S ribosomal subunit. Interacts with L10 and the large rRNA to form the base of the stalk. L10 forms an elongated spine to which L12 dimers bind in a sequential fashion forming a multimeric L10(L12)X complex. In terms of processing, one or more lysine residues are methylated.

In terms of biological role, forms part of the ribosomal stalk which helps the ribosome interact with GTP-bound translation factors. This Corynebacterium jeikeium (strain K411) protein is Large ribosomal subunit protein uL11.